A 306-amino-acid chain; its full sequence is MATVQLSRSIRIRKTSKKTVFPSQITNEHESLIMVKKLFATSISCITYLRGLFPESSYGERHLDDLSLKILREDKKCPGSLHIIKWIQGCFDALEKRYLRMAVLTLYTNPKEPEKVTEIYQFKFKYTKEGATMDFDSSNTSFKSGTNSEDIKKASVLLIRKLYMLMQNLGPLPNDVILTMTLHYYNAVTPNDYQPPGFKEGVSSHLLLFEGEPVNLQVGMVSTGFHSMKVKVTTEATRVSDLESSLFQESGTTEIAHQGLDCDEEEEECNTEIQKMNFVCSQQSSERSRKKRKVSEPVKVFIPDRK.

Residues 29 to 232 (HESLIMVKKL…TGFHSMKVKV (204 aa)) form the HORMA domain.

In terms of assembly, interacts with HORMAD1. In terms of processing, phosphorylated in a SPO11-dependent manner.

The protein resides in the nucleus. It is found in the chromosome. In terms of biological role, essential for synapsis surveillance during meiotic prophase via the recruitment of ATR activity. Plays a key role in the male mid-pachytene checkpoint and the female meiotic prophase checkpoint: required for efficient build-up of ATR activity on unsynapsed chromosome regions, a process believed to form the basis of meiotic silencing of unsynapsed chromatin (MSUC) and meiotic prophase quality control in both sexes. Required for the DNA double-strand break-independent, BRCA1-dependent activation of ATR on the sex chromosomes that is essential for normal sex body formation. This Bos taurus (Bovine) protein is HORMA domain-containing protein 2 (HORMAD2).